A 549-amino-acid polypeptide reads, in one-letter code: Hydroxylamine reductase (549 aa).

[4Fe-4S] cluster-binding residues include C5, C8, C17, and C23. Residues H250, E274, C318, C404, C432, C457, E491, and K493 each coordinate hybrid [4Fe-2O-2S] cluster. C404 bears the Cysteine persulfide mark.

Belongs to the HCP family. The cofactor is [4Fe-4S] cluster. Hybrid [4Fe-2O-2S] cluster serves as cofactor.

The protein resides in the cytoplasm. It carries out the reaction A + NH4(+) + H2O = hydroxylamine + AH2 + H(+). In terms of biological role, catalyzes the reduction of hydroxylamine to form NH(3) and H(2)O. This is Hydroxylamine reductase from Geobacter metallireducens (strain ATCC 53774 / DSM 7210 / GS-15).